The following is a 196-amino-acid chain: Probable DNA-directed RNA polymerase subunit delta (196 aa).

The HTH HARE-type domain occupies 14 to 81 (LSMIEVAHEI…GDNVWGLRSW (68 aa)). Acidic residues predominate over residues 119–150 (DDDDVIDYDDDDPEDEDLDNDYDDEDDDDDEG). Residues 119–196 (DDDDVIDYDD…DADLDEENQD (78 aa)) form a disordered region. The span at 151-161 (SHELKQYTKDL) shows a compositional bias: basic and acidic residues. Acidic residues-rich tracts occupy residues 162-176 (DDID…ELAD) and 186-196 (SDADLDEENQD).

This sequence belongs to the RpoE family. RNAP is composed of a core of 2 alpha, a beta and a beta' subunits. The core is associated with a delta subunit and one of several sigma factors.

Participates in both the initiation and recycling phases of transcription. In the presence of the delta subunit, RNAP displays an increased specificity of transcription, a decreased affinity for nucleic acids, and an increased efficiency of RNA synthesis because of enhanced recycling. The polypeptide is Probable DNA-directed RNA polymerase subunit delta (Ligilactobacillus salivarius (strain UCC118) (Lactobacillus salivarius)).